The following is a 64-amino-acid chain: MARAKGVRILVTLECTECRSNGERLGGGVSRYATKKNRRNTPNRLELNKFCPYCKKHVLHREIK.

It belongs to the bacterial ribosomal protein bL33 family.

It localises to the plastid. It is found in the cyanelle. The sequence is that of Large ribosomal subunit protein bL33c (rpl33) from Cyanophora paradoxa.